Reading from the N-terminus, the 229-residue chain is Small ribosomal subunit protein uS3 (229 aa).

The 69-residue stretch at 39–107 (VRQFLIKELK…PAQINISEVR (69 aa)) folds into the KH type-2 domain.

It belongs to the universal ribosomal protein uS3 family. In terms of assembly, part of the 30S ribosomal subunit. Forms a tight complex with proteins S10 and S14.

Functionally, binds the lower part of the 30S subunit head. Binds mRNA in the 70S ribosome, positioning it for translation. The protein is Small ribosomal subunit protein uS3 of Photobacterium profundum (strain SS9).